A 486-amino-acid chain; its full sequence is Elastin-binding protein EbpS (486 aa).

Positions 1–40 are enriched in basic and acidic residues; it reads MSNNFKDDFEKNRQSIDTNSHQDHTEDVEKDQSELEHQDT. Positions 1 to 314 are disordered; the sequence is MSNNFKDDFE…NHDRDKERKK (314 aa). Residues 2 to 204 are Extracellular-facing; sequence SNNFKDDFEK…ESKDHHSGKK (203 aa). The tract at residues 14 to 34 is elastin-binding; that stretch reads QSIDTNSHQDHTEDVEKDQSE. A compositionally biased stretch (polar residues) spans 64–85; it reads TNHNKQVHNESQTSEDNVQNEA. Composition is skewed to basic and acidic residues over residues 103–118 and 126–149; these read EPSH…EEYY and DKSH…ENNT. Residues 150–166 are compositionally biased toward polar residues; the sequence is EHSTVSDKSIAEQSQQP. Residues 180–199 are compositionally biased toward basic and acidic residues; the sequence is SKDKHDDVTVKQDKDESKDH. 2 stretches are compositionally biased toward low complexity: residues 204–225 and 233–246; these read KGAA…MGVS and DAQN…SNNS. Residues 205–225 form a helical membrane-spanning segment; sequence GAAIGAGTAGVAGAAGAMGVS. The Cytoplasmic portion of the chain corresponds to 226-319; sequence KAKKHSNDAQ…KERKKGGMAK (94 aa). Residues 247-259 show a composition bias toward basic and acidic residues; the sequence is TEDKASQDKSKDH. A compositionally biased stretch (low complexity) spans 278–297; that stretch reads GAASKSASAASKPHASNNAS. Over residues 299 to 314 the composition is skewed to basic and acidic residues; it reads NHDEHDNHDRDKERKK. A helical transmembrane segment spans residues 320-340; that stretch reads VLLPLIAAVLIIGALAIFGGM. At 341-486 the chain is on the extracellular side; it reads ALNNHNNGTK…IRNGQQIVIP (146 aa). The disordered stretch occupies residues 351–440; it reads ENKIANTNKN…QRQGGGQRHT (90 aa). The span at 361–398 shows a compositional bias: basic and acidic residues; it reads NADESKDKDTSKDASKDKSKSTDSDKSKEDQDKATKDE. Residues 403 to 431 are compositionally biased toward low complexity; sequence QNNANQANNQAQNNQNQQQANQNQQQQQQ. The LysM domain maps to 437 to 485; sequence QRHTVNGQENLYRIAIQYYGSGSPENVEKIRRANGLSGNNIRNGQQIVI.

The protein resides in the cell membrane. Functionally, promotes binding of soluble elastin peptides and tropoelastin to S.aureus cells although it is not able to promote bacterial adherence to immobilized elastin and, therefore, is not a microbial surface component recognizing adhesive matrix molecule (MSCRAMM). This Staphylococcus aureus (strain Mu50 / ATCC 700699) protein is Elastin-binding protein EbpS (ebpS).